We begin with the raw amino-acid sequence, 366 residues long: tRNA/tmRNA (uracil-C(5))-methyltransferase (366 aa).

Residues glutamine 190, tyrosine 218, asparagine 223, glutamate 239, and aspartate 299 each coordinate S-adenosyl-L-methionine. The active-site Nucleophile is cysteine 324. The active-site Proton acceptor is glutamate 358.

Belongs to the class I-like SAM-binding methyltransferase superfamily. RNA M5U methyltransferase family. TrmA subfamily.

The enzyme catalyses uridine(54) in tRNA + S-adenosyl-L-methionine = 5-methyluridine(54) in tRNA + S-adenosyl-L-homocysteine + H(+). It carries out the reaction uridine(341) in tmRNA + S-adenosyl-L-methionine = 5-methyluridine(341) in tmRNA + S-adenosyl-L-homocysteine + H(+). Dual-specificity methyltransferase that catalyzes the formation of 5-methyluridine at position 54 (m5U54) in all tRNAs, and that of position 341 (m5U341) in tmRNA (transfer-mRNA). This is tRNA/tmRNA (uracil-C(5))-methyltransferase from Escherichia coli (strain ATCC 8739 / DSM 1576 / NBRC 3972 / NCIMB 8545 / WDCM 00012 / Crooks).